A 408-amino-acid polypeptide reads, in one-letter code: Secreted effector protein SseJ (408 aa).

The active-site Nucleophile is S151. Residues D381 and H384 contribute to the active site.

This sequence belongs to the 'GDSL' lipolytic enzyme family. Interacts with RhoA and indirectly with SifA.

The protein resides in the secreted. It localises to the host cytoplasm. Functionally, effector proteins function to alter host cell physiology and promote bacterial survival in host tissues. This protein is required for endosomal tubulation and negatively regulates the formation of Salmonella-induced filaments (Sifs) in epithelial cells. Has both deacylase and esterification activities in vitro, but esterification is probably the dominant activity in host cells. Significantly contributes to cholesterol esterification, which reduces cellular cholesterol in cells and abrogates the ability of SifA to associate with cholesterol and LAMP-1 vesicles. The sequence is that of Secreted effector protein SseJ (sseJ) from Salmonella typhimurium (strain LT2 / SGSC1412 / ATCC 700720).